Reading from the N-terminus, the 143-residue chain is Flagellar assembly factor FliW (143 aa).

The protein belongs to the FliW family. Interacts with translational regulator CsrA and flagellin(s).

Its subcellular location is the cytoplasm. Functionally, acts as an anti-CsrA protein, binds CsrA and prevents it from repressing translation of its target genes, one of which is flagellin. Binds to flagellin and participates in the assembly of the flagellum. The protein is Flagellar assembly factor FliW of Bacillus licheniformis (strain ATCC 14580 / DSM 13 / JCM 2505 / CCUG 7422 / NBRC 12200 / NCIMB 9375 / NCTC 10341 / NRRL NRS-1264 / Gibson 46).